The following is a 400-amino-acid chain: Elongation factor Tu (400 aa).

One can recognise a tr-type G domain in the interval 10–208 (KPHLNVGTIG…TMDSYFPEPQ (199 aa)). The tract at residues 19 to 26 (GHIDHGKT) is G1. GTP is bound at residue 19 to 26 (GHIDHGKT). Residue Thr26 participates in Mg(2+) binding. The G2 stretch occupies residues 60–64 (GITIN). The interval 81-84 (DCPG) is G3. GTP contacts are provided by residues 81–85 (DCPGH) and 136–139 (NKTD). The G4 stretch occupies residues 136–139 (NKTD). A G5 region spans residues 174–176 (SAL).

This sequence belongs to the TRAFAC class translation factor GTPase superfamily. Classic translation factor GTPase family. EF-Tu/EF-1A subfamily. Monomer.

Its subcellular location is the cytoplasm. The catalysed reaction is GTP + H2O = GDP + phosphate + H(+). Functionally, GTP hydrolase that promotes the GTP-dependent binding of aminoacyl-tRNA to the A-site of ribosomes during protein biosynthesis. The polypeptide is Elongation factor Tu (Thermosipho africanus (strain TCF52B)).